We begin with the raw amino-acid sequence, 285 residues long: Flagellar filament 30.7 kDa core protein (285 aa).

This sequence belongs to the bacterial flagellin family. The core of the flagellum consists of several antigenically related polypeptides. In terms of processing, glycosylated. Glycosylation is not essential for motility.

The protein localises to the periplasmic flagellum. Its subcellular location is the periplasm. In terms of biological role, component of the core of the flagella. The polypeptide is Flagellar filament 30.7 kDa core protein (flaB3) (Treponema maltophilum).